Consider the following 693-residue polypeptide: Glycine--tRNA ligase beta subunit (693 aa).

The segment covering 65–74 (QPDKSVEKRG) has biased composition (basic and acidic residues). A disordered region spans residues 65 to 84 (QPDKSVEKRGPAVKAAFDDS).

Belongs to the class-II aminoacyl-tRNA synthetase family. As to quaternary structure, tetramer of two alpha and two beta subunits.

Its subcellular location is the cytoplasm. The enzyme catalyses tRNA(Gly) + glycine + ATP = glycyl-tRNA(Gly) + AMP + diphosphate. The polypeptide is Glycine--tRNA ligase beta subunit (Marinobacter nauticus (strain ATCC 700491 / DSM 11845 / VT8) (Marinobacter aquaeolei)).